Reading from the N-terminus, the 61-residue chain is Probable pancreatic secretory proteinase inhibitor (61 aa).

The Kazal-like domain maps to 6-61 (LYRKPSCGEMSAMHACPMNFAPVCGTDGNTYPNECSLCFQRQNTKTDILITKDDRC). Intrachain disulfides connect Cys-12–Cys-43, Cys-21–Cys-40, and Cys-29–Cys-61.

The protein localises to the secreted. This is Probable pancreatic secretory proteinase inhibitor from Anguilla anguilla (European freshwater eel).